The sequence spans 90 residues: Small ribosomal subunit protein bS16 (90 aa).

The protein belongs to the bacterial ribosomal protein bS16 family.

This is Small ribosomal subunit protein bS16 from Streptococcus equi subsp. zooepidemicus (strain H70).